Here is a 59-residue protein sequence, read N- to C-terminus: Large ribosomal subunit protein uL30 (59 aa).

Belongs to the universal ribosomal protein uL30 family. As to quaternary structure, part of the 50S ribosomal subunit.

The protein is Large ribosomal subunit protein uL30 of Buchnera aphidicola subsp. Acyrthosiphon kondoi (Acyrthosiphon kondoi symbiotic bacterium).